A 364-amino-acid polypeptide reads, in one-letter code: Methylthioribose-1-phosphate isomerase (364 aa).

Residue Asp-254 is the Proton donor of the active site.

Belongs to the eIF-2B alpha/beta/delta subunits family. MtnA subfamily.

It is found in the cytoplasm. The protein localises to the nucleus. The enzyme catalyses 5-(methylsulfanyl)-alpha-D-ribose 1-phosphate = 5-(methylsulfanyl)-D-ribulose 1-phosphate. The protein operates within amino-acid biosynthesis; L-methionine biosynthesis via salvage pathway; L-methionine from S-methyl-5-thio-alpha-D-ribose 1-phosphate: step 1/6. In terms of biological role, catalyzes the interconversion of methylthioribose-1-phosphate (MTR-1-P) into methylthioribulose-1-phosphate (MTRu-1-P). The polypeptide is Methylthioribose-1-phosphate isomerase (Drosophila sechellia (Fruit fly)).